The chain runs to 239 residues: MQPHLDNNSNNDDVKLDTLGEQNVLSSAENITLPEDTFKSYMTYLLYEMAHYKPMIFSFLALSVSILIVVIFHNVKACDVVFGFSIFVTSILFLSTLIPFNVYISDEGFRIKLLLEVITHRPAVKGKEWRAITDNMNQYLLDNGLWSTRYYFYSSERCYKFFRFLVKEKPPGVNVNSSVKDATSTQIDAPANEASNEVIKCFSFSSDPIFEAYFVKAVEVEKQAQQEYWRKQYPDADIP.

Topologically, residues 1–54 (MQPHLDNNSNNDDVKLDTLGEQNVLSSAENITLPEDTFKSYMTYLLYEMAHYKP) are cytoplasmic. The chain crosses the membrane as a helical span at residues 55 to 75 (MIFSFLALSVSILIVVIFHNV). At 76 to 79 (KACD) the chain is on the extracellular side. Residues 80–104 (VVFGFSIFVTSILFLSTLIPFNVYI) traverse the membrane as a helical segment. Over 105-239 (SDEGFRIKLL…RKQYPDADIP (135 aa)) the chain is Cytoplasmic.

Belongs to the DUP/COS family. Interacts according to large scale protein interaction studies with MEC3 and ULP1.

It is found in the membrane. This chain is DUP240 protein DFP3, found in Saccharomyces cerevisiae (strain ATCC 204508 / S288c) (Baker's yeast).